A 96-amino-acid polypeptide reads, in one-letter code: Co-chaperonin GroES (96 aa).

The protein belongs to the GroES chaperonin family. Heptamer of 7 subunits arranged in a ring. Interacts with the chaperonin GroEL.

Its subcellular location is the cytoplasm. Together with the chaperonin GroEL, plays an essential role in assisting protein folding. The GroEL-GroES system forms a nano-cage that allows encapsulation of the non-native substrate proteins and provides a physical environment optimized to promote and accelerate protein folding. GroES binds to the apical surface of the GroEL ring, thereby capping the opening of the GroEL channel. This Nitrosococcus oceani (strain ATCC 19707 / BCRC 17464 / JCM 30415 / NCIMB 11848 / C-107) protein is Co-chaperonin GroES.